Reading from the N-terminus, the 136-residue chain is Small ribosomal subunit protein uS12 (136 aa).

Residue Asp-89 is modified to 3-methylthioaspartic acid. Positions 101–136 (SLDTSGVADRKQSRSKYGAKQPKAGVPAPVKGKGKR) are disordered.

The protein belongs to the universal ribosomal protein uS12 family. In terms of assembly, part of the 30S ribosomal subunit. Contacts proteins S8 and S17. May interact with IF1 in the 30S initiation complex.

With S4 and S5 plays an important role in translational accuracy. Its function is as follows. Interacts with and stabilizes bases of the 16S rRNA that are involved in tRNA selection in the A site and with the mRNA backbone. Located at the interface of the 30S and 50S subunits, it traverses the body of the 30S subunit contacting proteins on the other side and probably holding the rRNA structure together. The combined cluster of proteins S8, S12 and S17 appears to hold together the shoulder and platform of the 30S subunit. The chain is Small ribosomal subunit protein uS12 from Pelodictyon phaeoclathratiforme (strain DSM 5477 / BU-1).